The following is a 123-amino-acid chain: UPF0738 protein BCG9842_B4089 (123 aa).

It belongs to the UPF0738 family.

The protein is UPF0738 protein BCG9842_B4089 of Bacillus cereus (strain G9842).